A 61-amino-acid chain; its full sequence is MDPNCSCATRDSCACASSCKCKECKCTSCKKSCCSCCPAGCTKCAQGCICKGALDKCSCCA.

Met-1 carries the N-acetylmethionine modification. The interval 1–29 (MDPNCSCATRDSCACASSCKCKECKCTSC) is beta. Positions 5, 7, 13, 15, 19, 21, 24, 26, 29, 33, 34, 36, 37, 41, 44, 48, 50, 57, 59, and 60 each coordinate a divalent metal cation. The segment at 30–61 (KKSCCSCCPAGCTKCAQGCICKGALDKCSCCA) is alpha.

This sequence belongs to the metallothionein superfamily. Type 1 family. Monomer.

In terms of biological role, metallothioneins have a high content of cysteine residues that bind various heavy metals; these proteins are transcriptionally regulated by both heavy metals and glucocorticoids. This is Metallothionein-2E from Oryctolagus cuniculus (Rabbit).